A 230-amino-acid chain; its full sequence is Orotidine 5'-phosphate decarboxylase (230 aa).

Substrate is bound by residues Asp12, Lys34, 61-70, Thr116, Arg177, Gln186, and Arg207; that span reads DMKLLDIDNT. Lys63 serves as the catalytic Proton donor.

It belongs to the OMP decarboxylase family. Type 1 subfamily. Homodimer.

It carries out the reaction orotidine 5'-phosphate + H(+) = UMP + CO2. The protein operates within pyrimidine metabolism; UMP biosynthesis via de novo pathway; UMP from orotate: step 2/2. In terms of biological role, catalyzes the decarboxylation of orotidine 5'-monophosphate (OMP) to uridine 5'-monophosphate (UMP). This is Orotidine 5'-phosphate decarboxylase from Rhizobium rhizogenes (strain K84 / ATCC BAA-868) (Agrobacterium radiobacter).